Consider the following 222-residue polypeptide: Charged multivesicular body protein 4a (222 aa).

Disordered stretches follow at residues 1 to 21 (MSGLGRLFGRGKKEKGPTPEE) and 177 to 222 (LLHV…EWVS). Positions 1 to 116 (MSGLGRLFGR…ELAAQGLKKA (116 aa)) are interaction with phosphoinosides. Positions 1-150 (MSGLGRLFGR…QISDAISRPV (150 aa)) are intramolecular interaction with C-terminus. Coiled coils occupy residues 20–105 (EEAI…VLRT) and 155–180 (DVDEDELLEELEELEQEELARELLHV). The segment at 151–222 (GFGDDVDEDE…ELKQLAEWVS (72 aa)) is intramolecular interaction with N-terminus. Ser196 is modified (phosphoserine).

The protein belongs to the SNF7 family. As to quaternary structure, probable core component of the endosomal sorting required for transport complex III (ESCRT-III). ESCRT-III components are thought to multimerize to form a flat lattice on the perimeter membrane of the endosome. Several assembly forms of ESCRT-III may exist that interact and act sequentially. Self-associates; overexpression leads to the assembly of filaments that curve and associate to create circular rings. Interacts with CHMP2A. Interacts with CHMP3; the interaction requires the release of CHMP4A autoinhibition. Interacts with CHMP4B. Interacts with CHMP4C. Interacts with CHMP6. Interacts with VPS4A. Interacts with PDCD6IP; the interaction is direct.

It localises to the cytoplasmic vesicle membrane. Its subcellular location is the late endosome membrane. Functionally, probable core component of the endosomal sorting required for transport complex III (ESCRT-III) which is involved in multivesicular bodies (MVBs) formation and sorting of endosomal cargo proteins into MVBs. MVBs contain intraluminal vesicles (ILVs) that are generated by invagination and scission from the limiting membrane of the endosome and mostly are delivered to lysosomes enabling degradation of membrane proteins, such as stimulated growth factor receptors, lysosomal enzymes and lipids. The MVB pathway appears to require the sequential function of ESCRT-O, -I,-II and -III complexes. ESCRT-III proteins mostly dissociate from the invaginating membrane before the ILV is released. The ESCRT machinery also functions in topologically equivalent membrane fission events, such as the terminal stages of cytokinesis and the budding of enveloped viruses (lentiviruses). ESCRT-III proteins are believed to mediate the necessary vesicle extrusion and/or membrane fission activities, possibly in conjunction with the AAA ATPase VPS4. When overexpressed, membrane-assembled circular arrays of CHMP4A filaments can promote or stabilize negative curvature and outward budding. CHMP4A/B/C are required for the exosomal release of SDCBP, CD63 and syndecan. This Bos taurus (Bovine) protein is Charged multivesicular body protein 4a (CHMP4A).